The primary structure comprises 126 residues: C-type natriuretic peptide 2 (126 aa).

Residues 1 to 22 (MAVCSSSSLILLTVFLSVAVET) form the signal peptide. The propeptide occupies 23–102 (RPSSDRDEEQ…REKTRRWGRK (80 aa)). Residues 44-80 (SLILAPPTSNDSTEGSSGSPEPPTPSEAPVLIHGDRG) are disordered. C110 and C126 are oxidised to a cystine.

The protein belongs to the natriuretic peptide family. In terms of tissue distribution, brain and spinal cord.

Its subcellular location is the secreted. Functionally, exhibits natriuretic and vasodepressant activity. Has cGMP-stimulating activity. May help to regulate body fluid homeostasis in a variety of aquatic environments. This chain is C-type natriuretic peptide 2, found in Oryzias latipes (Japanese rice fish).